A 207-amino-acid chain; its full sequence is Glutathione S-transferase 3 (207 aa).

The region spanning 2-79 is the GST N-terminal domain; it reads VHYKLTYFNA…YLARKFGFVG (78 aa). Glutathione contacts are provided by residues Y8, K43, 49–51, and 63–64; these read GQV and QS. The 127-residue stretch at 81-207 folds into the GST C-terminal domain; sequence TAEEELQADE…WLAKRPETRF (127 aa).

The protein belongs to the GST superfamily. Sigma family.

The enzyme catalyses RX + glutathione = an S-substituted glutathione + a halide anion + H(+). Its function is as follows. Conjugation of reduced glutathione to a wide number of exogenous and endogenous hydrophobic electrophiles. The polypeptide is Glutathione S-transferase 3 (gst-3) (Caenorhabditis elegans).